Consider the following 274-residue polypeptide: Bis(5'-nucleosyl)-tetraphosphatase, symmetrical (274 aa).

This sequence belongs to the Ap4A hydrolase family.

It carries out the reaction P(1),P(4)-bis(5'-adenosyl) tetraphosphate + H2O = 2 ADP + 2 H(+). Hydrolyzes diadenosine 5',5'''-P1,P4-tetraphosphate to yield ADP. In Shewanella baltica (strain OS155 / ATCC BAA-1091), this protein is Bis(5'-nucleosyl)-tetraphosphatase, symmetrical.